We begin with the raw amino-acid sequence, 338 residues long: Ribosomal RNA small subunit methyltransferase C (338 aa).

The protein belongs to the methyltransferase superfamily. RsmC family. Monomer.

It is found in the cytoplasm. The catalysed reaction is guanosine(1207) in 16S rRNA + S-adenosyl-L-methionine = N(2)-methylguanosine(1207) in 16S rRNA + S-adenosyl-L-homocysteine + H(+). Specifically methylates the guanine in position 1207 of 16S rRNA in the 30S particle. The sequence is that of Ribosomal RNA small subunit methyltransferase C from Acinetobacter baylyi (strain ATCC 33305 / BD413 / ADP1).